A 311-amino-acid chain; its full sequence is Malate dehydrogenase (311 aa).

NAD(+) contacts are provided by residues 7–13 (GAAGGIG) and Asp-34. Positions 81 and 87 each coordinate substrate. Residues Asn-94 and 117–119 (ITN) contribute to the NAD(+) site. Positions 119 and 153 each coordinate substrate. Residue His-177 is the Proton acceptor of the active site. Position 227 (Met-227) interacts with NAD(+).

The protein belongs to the LDH/MDH superfamily. MDH type 1 family. In terms of assembly, homodimer.

The catalysed reaction is (S)-malate + NAD(+) = oxaloacetate + NADH + H(+). Functionally, catalyzes the reversible oxidation of malate to oxaloacetate. This is Malate dehydrogenase from Aliivibrio fischeri (strain ATCC 700601 / ES114) (Vibrio fischeri).